A 72-amino-acid polypeptide reads, in one-letter code: Protein kish-A (72 aa).

Positions 1–26 (MSAIFNFQSLLIVILLLICTCAYLRA) are cleaved as a signal peptide. Over 27–53 (LVPNLLDKNKTGILGIFWKCARIGERK) the chain is Extracellular. Asn-35 carries N-linked (GlcNAc...) asparagine glycosylation. A helical transmembrane segment spans residues 54 to 71 (SPYVAVCCVVMAFSILFM). Gln-72 is a topological domain (cytoplasmic).

The protein belongs to the KISH family.

It localises to the golgi apparatus membrane. Its function is as follows. Involved in the early part of the secretory pathway. The chain is Protein kish-A (tmem167a) from Xenopus tropicalis (Western clawed frog).